A 250-amino-acid chain; its full sequence is Phosphoribosylaminoimidazole-succinocarboxamide synthase (250 aa).

It belongs to the SAICAR synthetase family.

The catalysed reaction is 5-amino-1-(5-phospho-D-ribosyl)imidazole-4-carboxylate + L-aspartate + ATP = (2S)-2-[5-amino-1-(5-phospho-beta-D-ribosyl)imidazole-4-carboxamido]succinate + ADP + phosphate + 2 H(+). Its pathway is purine metabolism; IMP biosynthesis via de novo pathway; 5-amino-1-(5-phospho-D-ribosyl)imidazole-4-carboxamide from 5-amino-1-(5-phospho-D-ribosyl)imidazole-4-carboxylate: step 1/2. This is Phosphoribosylaminoimidazole-succinocarboxamide synthase from Bifidobacterium longum (strain DJO10A).